A 590-amino-acid polypeptide reads, in one-letter code: Protein NRT1/ PTR FAMILY 6.4 (590 aa).

A disordered region spans residues 1–24 (MVHVSSSHGAKDGSEEAYDYRGNP). 12 helical membrane-spanning segments follow: residues 48–68 (ICVM…LHIS), 73–93 (ATIV…GGFL), 104–124 (VAIS…ATTI), 147–167 (GHQL…GGGI), 197–217 (FYFS…YVQD), 222–242 (GWGY…LLCG), 332–352 (VKLV…WTIY), 371–391 (GSFT…ILLF), 419–439 (IGVG…IENA), 453–473 (AFWL…AYVG), 492–512 (GLFL…VSLV), and 533–553 (FYWL…VFAM).

It belongs to the major facilitator superfamily. Proton-dependent oligopeptide transporter (POT/PTR) (TC 2.A.17) family. In terms of tissue distribution, expressed in leaves, flowers and siliques. Detected in leaves.

The protein localises to the membrane. In terms of biological role, low-affinity nitrate transporter. The sequence is that of Protein NRT1/ PTR FAMILY 6.4 (NPF6.4) from Arabidopsis thaliana (Mouse-ear cress).